Here is a 213-residue protein sequence, read N- to C-terminus: Flagellin A1 (213 aa).

Positions 1–10 (MFENINEDRG) are excised as a propeptide. Residues asparagine 70, asparagine 115, and asparagine 172 are each glycosylated (N-linked (GlcNAc...) asparagine).

The protein belongs to the archaeal flagellin family. Post-translationally, glycosylated by a pentasaccharide similar to the S-layer glycoprotein, probably comprising a hexose, 2 hexuronic acids, a methyl ester of a hexuronic acid and mannose. Glycosylation is required for biosynthesis of stable flagella.

The protein resides in the archaeal flagellum. Major flagellin required for motility. Not involved in PibD-dependent surface adhesion. Much more abundant in cells compared to FlgA2. This chain is Flagellin A1 (flgA1), found in Haloferax volcanii (strain ATCC 29605 / DSM 3757 / JCM 8879 / NBRC 14742 / NCIMB 2012 / VKM B-1768 / DS2) (Halobacterium volcanii).